A 129-amino-acid polypeptide reads, in one-letter code: Arsenate-mycothiol transferase ArsC2 (129 aa).

Belongs to the low molecular weight phosphotyrosine protein phosphatase family.

Its subcellular location is the cytoplasm. The catalysed reaction is mycothiol + arsenate = arseno-mycothiol + H2O. Functionally, involved in defense against toxic arsenate. Involved in the mycothiol/myoredoxin redox pathway which uses a mycothioltransferase mechanism; facilitates adduct formation between arsenate and mycothiol. The protein is Arsenate-mycothiol transferase ArsC2 (arsC2) of Corynebacterium glutamicum (strain ATCC 13032 / K051).